Reading from the N-terminus, the 418-residue chain is Homocitrate synthase, mitochondrial (418 aa).

Residues 1–10 (MSVSEANGTE) show a composition bias toward polar residues. A disordered region spans residues 1-25 (MSVSEANGTETIKPPMNGNPYGPNP). The segment covering 14 to 25 (PPMNGNPYGPNP) has biased composition (low complexity). A Pyruvate carboxyltransferase domain is found at 35-288 (FSIIESTLRE…THKYKLNQLR (254 aa)). The 2-oxoglutarate site is built by Arg-43, Glu-44, and His-103. Position 44 (Glu-44) interacts with L-lysine. Glu-44 is a binding site for Zn(2+). L-lysine is bound at residue Asp-123. 2-oxoglutarate contacts are provided by Arg-163, Ser-165, Thr-197, His-224, and His-226. Residue Thr-197 participates in L-lysine binding. Zn(2+) is bound by residues His-224 and His-226. His-321 (proton acceptor) is an active-site residue.

It belongs to the alpha-IPM synthase/homocitrate synthase family. Homocitrate synthase LYS20/LYS21 subfamily. Requires Mg(2+) as cofactor. The cofactor is Mn(2+). Zn(2+) serves as cofactor. It depends on Co(2+) as a cofactor.

It localises to the mitochondrion. The enzyme catalyses acetyl-CoA + 2-oxoglutarate + H2O = (2R)-homocitrate + CoA + H(+). It functions in the pathway amino-acid biosynthesis; L-lysine biosynthesis via AAA pathway; L-alpha-aminoadipate from 2-oxoglutarate: step 1/5. Its activity is regulated as follows. The activity is controled by feedback inhibition by L-lysine, the final product of the pathway that acts as a competitive inhibitor of 2-oxoglutarate. Functionally, catalyzes the aldol-type condensation of 2-oxoglutarate with acetyl-CoA to yield homocitrate, the first step of the alpha-aminoadipate (AAA) lysine biosynthesis pathway. The protein is Homocitrate synthase, mitochondrial of Schizosaccharomyces pombe (strain 972 / ATCC 24843) (Fission yeast).